Reading from the N-terminus, the 420-residue chain is Gamma-glutamyl phosphate reductase (420 aa).

It belongs to the gamma-glutamyl phosphate reductase family.

The protein resides in the cytoplasm. The catalysed reaction is L-glutamate 5-semialdehyde + phosphate + NADP(+) = L-glutamyl 5-phosphate + NADPH + H(+). The protein operates within amino-acid biosynthesis; L-proline biosynthesis; L-glutamate 5-semialdehyde from L-glutamate: step 2/2. In terms of biological role, catalyzes the NADPH-dependent reduction of L-glutamate 5-phosphate into L-glutamate 5-semialdehyde and phosphate. The product spontaneously undergoes cyclization to form 1-pyrroline-5-carboxylate. The protein is Gamma-glutamyl phosphate reductase of Pasteurella multocida (strain Pm70).